The sequence spans 523 residues: ATP synthase subunit beta, mitochondrial (523 aa).

The transit peptide at Met-1–Gln-19 directs the protein to the mitochondrion. Gly-201–Thr-208 is an ATP binding site.

The protein belongs to the ATPase alpha/beta chains family. In terms of assembly, F-type ATPases have 2 components, CF(1) - the catalytic core - and CF(0) - the membrane proton channel. CF(1) has five subunits: alpha(3), beta(3), gamma(1), delta(1), epsilon(1). CF(0) has three main subunits: a, b and c.

It localises to the mitochondrion. Its subcellular location is the mitochondrion inner membrane. It catalyses the reaction ATP + H2O + 4 H(+)(in) = ADP + phosphate + 5 H(+)(out). Mitochondrial membrane ATP synthase (F(1)F(0) ATP synthase or Complex V) produces ATP from ADP in the presence of a proton gradient across the membrane which is generated by electron transport complexes of the respiratory chain. F-type ATPases consist of two structural domains, F(1) - containing the extramembraneous catalytic core, and F(0) - containing the membrane proton channel, linked together by a central stalk and a peripheral stalk. During catalysis, ATP synthesis in the catalytic domain of F(1) is coupled via a rotary mechanism of the central stalk subunits to proton translocation. Subunits alpha and beta form the catalytic core in F(1). Rotation of the central stalk against the surrounding alpha(3)beta(3) subunits leads to hydrolysis of ATP in three separate catalytic sites on the beta subunits. The polypeptide is ATP synthase subunit beta, mitochondrial (Hemicentrotus pulcherrimus (Sea urchin)).